Consider the following 705-residue polypeptide: Voltage-dependent calcium channel beta subunit-associated regulatory protein (705 aa).

Residues 1–45 lie on the Extracellular side of the membrane; that stretch reads MQPTATMATAATTTTTTTATVALTTSWDNATGRPTAEPDPILDNY. An N-linked (GlcNAc...) asparagine glycan is attached at N29. Residues 46 to 66 form a helical; Signal-anchor for type III membrane protein membrane-spanning segment; the sequence is VLLVVVMSLFVGGTLVVLSGV. At 67–705 the chain is on the cytoplasmic side; that stretch reads LLLCKRCWDV…APTSPDHSPA (639 aa). Disordered stretches follow at residues 91–113 and 212–284; these read TTTY…EDPE and GKAL…GSGA. Positions 245–254 are enriched in polar residues; sequence PSASSDSGEG. Residues 267–284 show a composition bias toward gly residues; sequence GGPGAAAGPGEAGPGSGA. A phosphoserine mark is found at S299 and S304. Disordered stretches follow at residues 316-353, 369-436, 448-540, and 559-655; these read PSQR…DAPQ, FPHP…SYRD, AAAS…RRDY, and HFDD…CPGS. Residues 344 to 353 show a composition bias toward acidic residues; that stretch reads TEQEEGDAPQ. Positions 371-382 are enriched in pro residues; the sequence is HPRPFLASPPPA. A compositionally biased stretch (low complexity) spans 383–397; that stretch reads LGRLEAAEAAGGASP. Positions 479–488 are enriched in pro residues; it reads AFPPPSPPAP. Over residues 489–499 the composition is skewed to basic and acidic residues; sequence RPKDGEARRLL. Phosphoserine occurs at positions 507 and 528. Over residues 567-585 the composition is skewed to basic residues; sequence ARHRARAHPHARKQWQRGR. Residues 591 to 614 are compositionally biased toward low complexity; sequence GARAAPALAGTPAPPAGAARPARA. S621 is modified (phosphoserine). A Phosphothreonine modification is found at T698. A phosphoserine mark is found at S699 and S703.

As to quaternary structure, interacts with voltage-dependent calcium channels CACNB1, CACNB2, CACNB3 and CACNB4 beta subunits; prevents their interaction with the CACNA1C alpha subunit thereby negatively regulating the activity of the corresponding calcium channels.

Its subcellular location is the cytoplasmic vesicle. The protein resides in the secretory vesicle. It is found in the synaptic vesicle membrane. It localises to the cell membrane. The protein localises to the cell projection. Its subcellular location is the growth cone. Its function is as follows. Negatively regulates voltage-gated calcium channels by preventing the interaction between their alpha and beta subunits. Thereby, negatively regulates calcium channels activity at the plasma membrane and indirectly inhibits calcium-regulated exocytosis. The sequence is that of Voltage-dependent calcium channel beta subunit-associated regulatory protein from Homo sapiens (Human).